A 202-amino-acid chain; its full sequence is Nucleoside triphosphate pyrophosphatase (202 aa).

Asp79 serves as the catalytic Proton acceptor.

Belongs to the Maf family. The cofactor is a divalent metal cation.

The protein localises to the cytoplasm. The enzyme catalyses a ribonucleoside 5'-triphosphate + H2O = a ribonucleoside 5'-phosphate + diphosphate + H(+). It catalyses the reaction a 2'-deoxyribonucleoside 5'-triphosphate + H2O = a 2'-deoxyribonucleoside 5'-phosphate + diphosphate + H(+). Its function is as follows. Nucleoside triphosphate pyrophosphatase. May have a dual role in cell division arrest and in preventing the incorporation of modified nucleotides into cellular nucleic acids. The chain is Nucleoside triphosphate pyrophosphatase from Nitrobacter winogradskyi (strain ATCC 25391 / DSM 10237 / CIP 104748 / NCIMB 11846 / Nb-255).